A 912-amino-acid chain; its full sequence is MESLKTDTEMPYPEVIVDVGRVIFGEENRKKMTNSCLKRSENSRIIRAICALLNSGGGVIKAEIDDKTYSYQCHGLGQDLETSFQKLLPSGSQKYLDYMQQGHNLLIFVKSWSPDVFSLPLRICSLRSNLYRRDVTSAINLSASSALELLREKGFRAQRGRPRVKKLHPQQVLNRCIQEEEDMRILASEFFKKDKLMYKEKLNFTESTHVEFKRFTTKKVIPRIKEMLPHYVSAFANTQGGYVLIGVDDKSKEVVGCKWEKVNPDLLKKEIENCIEKLPTFHFCCEKPKVNFTTKILNVYQKDVLDGYVCVIQVEPFCCVVFAEAPDSWIMKDNSVTRLTAEQWVVMMLDTQSAPPSLVTDYNSCLISSASSARKSPGYPIKVHKFKEALQRHLFPVTQEEVQFKPESLCKKLFSDHKELEGLMKTLIHPCSQGIVIFSRSWAGDVGFRKEQNVLCDALLIAVNSPVVLYTILIDPNWPGGLEYARNTAHQLKQKLQTVGGYTGKVCIIPRLIHLSSTQSRPGEIPLRYPRSYRLADEEEMEDLLQALVVVSLSSRSLLSDQMGCEFFNLLIMEQSQLLSESLQKTRELFIYCFPGVRKTALAIKIMEKIKDLFHCKPKEILYVCESDSLKDFVTQQTTCQAVTRKTFMQGEFLKIKHIVMDETENFCSKYGNWYMKAKNITHPKAKGTGSENLHHGILWLFLDPFQIHHADVNGLPPPSAQFPRKTITSGIHCALEIAKVMKEEMKRIKENPPSNMSPDTLALFSETAYEEATCAQALPGVCETKTNLTTEQIANYVARKCHSLFQCGYLPKDIAILCRRGEDRGRYRLALLKAMELIETHRPSEVVFSPATGVWGSHIVLDSIQQFSGLERTVVFGLSPECDQSEEFHKLCFASRAIKHLYLLYEKRAAY.

The required for endoribonuclease activity stretch occupies residues 206–391; sequence ESTHVEFKRF…KVHKFKEALQ (186 aa). The required for ribosome binding stretch occupies residues 392 to 571; the sequence is RHLFPVTQEE…QMGCEFFNLL (180 aa). ATP is bound at residue 593-600; sequence CFPGVRKT.

It belongs to the Schlafen family. Subgroup III subfamily. As to quaternary structure, associates with ribosomes in an ATP-independent manner. Requires Mg(2+) as cofactor. Mn(2+) serves as cofactor. As to expression, expressed in megakaryocytes and platelets (at protein level). Weakly expressed in melanocytes and malignant melanoma cells.

The protein resides in the nucleus. Shows no ribosome-associated and endoribonuclease activities. Functionally, displays polysome-associated endoribonuclease activity towards mRNAs and rRNAs. May play a role in RNA surveillance pathways by recognizing stalled ribosomes and triggering endonucleolytic cleavage of aberrant mRNAs. Cleaves different types of rRNAs and mRNAs in a magnesium- and manganese-dependent and ATP-independent manner. Involved in correct maturation of megakaryocytes and especially important for proplatelet extension. The protein is Protein SLFN14 of Homo sapiens (Human).